Reading from the N-terminus, the 363-residue chain is Dual-specificity RNA methyltransferase RlmN (363 aa).

Residue E102 is the Proton acceptor of the active site. Residues 108 to 344 form the Radical SAM core domain; that stretch reads EKKRSTLCVS…TTTIRKNRGE (237 aa). Cysteines 115 and 350 form a disulfide. [4Fe-4S] cluster-binding residues include C122, C126, and C129. S-adenosyl-L-methionine is bound by residues 174-175, S206, 228-230, and N307; these read GE and SLH. The S-methylcysteine intermediate role is filled by C350.

The protein belongs to the radical SAM superfamily. RlmN family. [4Fe-4S] cluster is required as a cofactor.

The protein localises to the cytoplasm. The catalysed reaction is adenosine(2503) in 23S rRNA + 2 reduced [2Fe-2S]-[ferredoxin] + 2 S-adenosyl-L-methionine = 2-methyladenosine(2503) in 23S rRNA + 5'-deoxyadenosine + L-methionine + 2 oxidized [2Fe-2S]-[ferredoxin] + S-adenosyl-L-homocysteine. The enzyme catalyses adenosine(37) in tRNA + 2 reduced [2Fe-2S]-[ferredoxin] + 2 S-adenosyl-L-methionine = 2-methyladenosine(37) in tRNA + 5'-deoxyadenosine + L-methionine + 2 oxidized [2Fe-2S]-[ferredoxin] + S-adenosyl-L-homocysteine. In terms of biological role, specifically methylates position 2 of adenine 2503 in 23S rRNA and position 2 of adenine 37 in tRNAs. m2A2503 modification seems to play a crucial role in the proofreading step occurring at the peptidyl transferase center and thus would serve to optimize ribosomal fidelity. The chain is Dual-specificity RNA methyltransferase RlmN from Buchnera aphidicola subsp. Acyrthosiphon pisum (strain APS) (Acyrthosiphon pisum symbiotic bacterium).